The chain runs to 275 residues: Interleukin-2 receptor subunit alpha (275 aa).

The signal sequence occupies residues 1 to 21 (MEPSLLMWRFFVFIVVPGCVT). Sushi domains follow at residues 22-81 (EACH…FCNS) and 121-186 (GHCE…KCIS). The Extracellular segment spans residues 22-243 (EACHDDPPSL…DTFIFTTEYQ (222 aa)). 3 cysteine pairs are disulfide-bonded: Cys24–Cys64, Cys49–Cys77, and Cys51–Cys79. Asn80 carries N-linked (GlcNAc...) asparagine glycosylation. The disordered stretch occupies residues 86–130 (KNPVKPVTPGSEEQRERKPTDAQSQTQPPEQADLPGHCEEPPPWE). Positions 121 to 130 (GHCEEPPPWE) are enriched in basic and acidic residues. 2 cysteine pairs are disulfide-bonded: Cys123–Cys168 and Cys152–Cys184. The tract at residues 188–213 (GANSQAPDEAEPPESTEAPPGSGTFL) is disordered. Residues 244 to 262 (IAVAGCILLLSSILLLSCL) form a helical membrane-spanning segment. Residues 263–275 (TWQRRWKKNRRTI) are Cytoplasmic-facing.

As to quaternary structure, non-covalent dimer of an alpha and a beta subunit. IL2R exists in 3 different forms: a high affinity dimer, an intermediate affinity monomer (beta subunit), and a low affinity monomer (alpha subunit). The high and intermediate affinity forms also associate with a gamma subunit.

It localises to the membrane. In terms of biological role, receptor for interleukin-2. The receptor is involved in the regulation of immune tolerance by controlling regulatory T cells (TREGs) activity. TREGs suppress the activation and expansion of autoreactive T-cells. The polypeptide is Interleukin-2 receptor subunit alpha (IL2RA) (Ovis aries (Sheep)).